Here is a 265-residue protein sequence, read N- to C-terminus: tRNA pseudouridine synthase A (265 aa).

D55 serves as the catalytic Nucleophile. Y113 contacts substrate.

This sequence belongs to the tRNA pseudouridine synthase TruA family. In terms of assembly, homodimer.

The enzyme catalyses uridine(38/39/40) in tRNA = pseudouridine(38/39/40) in tRNA. In terms of biological role, formation of pseudouridine at positions 38, 39 and 40 in the anticodon stem and loop of transfer RNAs. The polypeptide is tRNA pseudouridine synthase A (Levilactobacillus brevis (strain ATCC 367 / BCRC 12310 / CIP 105137 / JCM 1170 / LMG 11437 / NCIMB 947 / NCTC 947) (Lactobacillus brevis)).